Here is a 472-residue protein sequence, read N- to C-terminus: Nuclear receptor subfamily 0 group B member 1 (472 aa).

Repeat copies occupy residues 1–67, 68–135, and 136–202. The interval 1 to 255 is 4 X 67 AA tandem repeats; it reads MAGEDHPWHG…RPIALKDPQV (255 aa). 3 consecutive short sequence motifs (LXXLL motif) follow at residues 13 to 17, 80 to 84, and 148 to 152; these read LYNLL, LYSML, and LYSLL. Positions 190–471 constitute an NR LBD domain; that stretch reads QSTQAMAFLY…DMMLEMLCAK (282 aa). One copy of the 4; truncated repeat lies at 203–255; sequence VCCEEQPQQSSVASDTPVRADQTPAAPQEQPRAPWWDTSSGVQRPIALKDPQV. Disordered regions lie at residues 214–237 and 326–345; these read VASD…RAPW and RRQE…EQPQ. The AF-2 motif signature appears at 463 to 468; that stretch reads MMLEML.

The protein belongs to the nuclear hormone receptor family. NR0 subfamily. In terms of assembly, homodimer. Interacts with NR5A1, NR5A2, NR0B2 and with COPS2. Interacts with ESRRB; represses ESRRB activity at the GATA6 promoter.

The protein resides in the nucleus. It localises to the cytoplasm. Its function is as follows. Nuclear receptor that lacks a DNA-binding domain and acts as a corepressor that inhibits the transcriptional activity of other nuclear receptors through heterodimeric interactions. Component of a cascade required for the development of the hypothalamic-pituitary-adrenal-gonadal axis. May also have a role in the development of the embryo and in the maintenance of embryonic stem cell pluripotency. This chain is Nuclear receptor subfamily 0 group B member 1 (Nr0b1), found in Rattus norvegicus (Rat).